A 422-amino-acid chain; its full sequence is 3-carboxy-cis,cis-muconate cycloisomerase (422 aa).

This sequence belongs to the class-II fumarase/aspartase family. Homotetramer.

It is found in the cytoplasm. It carries out the reaction 2-(carboxymethyl)-5-oxo-2,5-dihydro-2-furoate = 3-carboxy-cis,cis-muconate + H(+). The protein operates within aromatic compound metabolism; beta-ketoadipate pathway; 5-oxo-4,5-dihydro-2-furylacetate from 3-carboxy-cis,cis-muconate: step 1/2. Functionally, catalyzes an anti cycloisomerization. The sequence is that of 3-carboxy-cis,cis-muconate cycloisomerase (pcaB) from Pseudomonas putida (Arthrobacter siderocapsulatus).